The following is a 409-amino-acid chain: Pyrophosphate--fructose 6-phosphate 1-phosphotransferase (409 aa).

Glycine 14 lines the diphosphate pocket. Aspartate 123 is a binding site for Mg(2+). Substrate-binding positions include 151-153 (TID), 196-198 (MGR), glutamate 268, and 325-328 (YFAR). The active-site Proton acceptor is the aspartate 153.

Belongs to the phosphofructokinase type A (PFKA) family. PPi-dependent PFK group II subfamily. Clade 'P' sub-subfamily. As to quaternary structure, homotetramer. Mg(2+) is required as a cofactor.

The protein resides in the cytoplasm. The enzyme catalyses beta-D-fructose 6-phosphate + diphosphate = beta-D-fructose 1,6-bisphosphate + phosphate + H(+). It functions in the pathway carbohydrate degradation; glycolysis; D-glyceraldehyde 3-phosphate and glycerone phosphate from D-glucose: step 3/4. With respect to regulation, non-allosteric. Catalyzes the phosphorylation of D-fructose 6-phosphate, the first committing step of glycolysis. Uses inorganic phosphate (PPi) as phosphoryl donor instead of ATP like common ATP-dependent phosphofructokinases (ATP-PFKs), which renders the reaction reversible, and can thus function both in glycolysis and gluconeogenesis. Consistently, PPi-PFK can replace the enzymes of both the forward (ATP-PFK) and reverse (fructose-bisphosphatase (FBPase)) reactions. The polypeptide is Pyrophosphate--fructose 6-phosphate 1-phosphotransferase (Methylotuvimicrobium alcaliphilum (strain DSM 19304 / NCIMB 14124 / VKM B-2133 / 20Z) (Methylomicrobium alcaliphilum)).